The primary structure comprises 100 residues: Large ribosomal subunit protein uL23 (100 aa).

Belongs to the universal ribosomal protein uL23 family. Part of the 50S ribosomal subunit. Contacts protein L29, and trigger factor when it is bound to the ribosome.

One of the early assembly proteins it binds 23S rRNA. One of the proteins that surrounds the polypeptide exit tunnel on the outside of the ribosome. Forms the main docking site for trigger factor binding to the ribosome. In Prochlorococcus marinus (strain MIT 9301), this protein is Large ribosomal subunit protein uL23.